Here is a 283-residue protein sequence, read N- to C-terminus: uncharacterized protein (283 aa).

3 Solcar repeats span residues 14–95 (QPVW…LKHL), 102–185 (NDHA…SEAV), and 190–274 (GLAL…TLQG). 6 helical membrane passes run 20–40 (TLAGGISSVICRFMIAPFDVI), 70–90 (GNVVAELLYLVYGAAEFVAFS), 105–125 (AVNFLCGTSAGIFATLTSYPL), 157–177 (FFPGLKFSVIQIGPYAGCFFM), 184–204 (AVLSPLGLALSSTLSGVIAGA), and 249–266 (GLSVSMLKVAPGRAITML).

This sequence belongs to the mitochondrial carrier (TC 2.A.29) family.

The protein localises to the mitochondrion inner membrane. This is an uncharacterized protein from Schizosaccharomyces pombe (strain 972 / ATCC 24843) (Fission yeast).